The sequence spans 273 residues: 4-hydroxy-tetrahydrodipicolinate reductase (273 aa).

NAD(+) contacts are provided by residues 12-17 (GAGGRM) and Glu-38. Residue Arg-39 coordinates NADP(+). NAD(+)-binding positions include 102–104 (GTT) and 126–129 (AANF). His-159 serves as the catalytic Proton donor/acceptor. (S)-2,3,4,5-tetrahydrodipicolinate is bound at residue His-160. The Proton donor role is filled by Lys-163. 169 to 170 (GT) lines the (S)-2,3,4,5-tetrahydrodipicolinate pocket.

The protein belongs to the DapB family. As to quaternary structure, homotetramer.

The protein resides in the cytoplasm. It carries out the reaction (S)-2,3,4,5-tetrahydrodipicolinate + NAD(+) + H2O = (2S,4S)-4-hydroxy-2,3,4,5-tetrahydrodipicolinate + NADH + H(+). The catalysed reaction is (S)-2,3,4,5-tetrahydrodipicolinate + NADP(+) + H2O = (2S,4S)-4-hydroxy-2,3,4,5-tetrahydrodipicolinate + NADPH + H(+). Its pathway is amino-acid biosynthesis; L-lysine biosynthesis via DAP pathway; (S)-tetrahydrodipicolinate from L-aspartate: step 4/4. Catalyzes the conversion of 4-hydroxy-tetrahydrodipicolinate (HTPA) to tetrahydrodipicolinate. The chain is 4-hydroxy-tetrahydrodipicolinate reductase from Proteus mirabilis (strain HI4320).